The primary structure comprises 376 residues: Gibberellic acid methyltransferase 1 (376 aa).

Residues Tyr-22, Cys-64, Asn-69, Asp-104, Leu-105, Ser-136, and Phe-137 each coordinate S-adenosyl-L-homocysteine. Trp-158 serves as a coordination point for gibberellin A9. Residues Asn-175, Val-179, Arg-265, Asp-266, Phe-268, and Asn-269 each coordinate Mg(2+).

It belongs to the methyltransferase superfamily. Type-7 methyltransferase family. SABATH subfamily. It depends on Mg(2+) as a cofactor. As to expression, expressed in siliques, developing seeds, anthers and germinating seeds. Not detected in leaves, stems, flowers and roots.

The catalysed reaction is gibberellin A9 + S-adenosyl-L-methionine = O-methyl gibberellin A9 + S-adenosyl-L-homocysteine. Up-regulated by K(+) and NH(4+), down-regulated by Zn(2+), Cu(2+), Fe(2+) and Fe(3+). Functionally, methylates the carboxyl group of several gibberellins (GAs). Substrate preference is GA9 &gt; GA20 &gt; GA3 &gt; GA4 &gt; GA34 &gt; GA51 &gt; GA1 &gt; GA19 &gt; GA12. No activity with diterpenes abietic acid and ent-kaurenoic acid. This Arabidopsis thaliana (Mouse-ear cress) protein is Gibberellic acid methyltransferase 1 (GAMT1).